The primary structure comprises 329 residues: Thiamine thiazole synthase (329 aa).

Substrate is bound by residues Cys86, 107–108 (EA), Gly115, and Val180. Residue Cys218 is modified to 2,3-didehydroalanine (Cys). Substrate is bound by residues Asp220, His235, Met287, and 297–299 (RMG).

Belongs to the THI4 family. As to quaternary structure, homooctamer. Fe cation serves as cofactor. In terms of processing, during the catalytic reaction, a sulfide is transferred from Cys-218 to a reaction intermediate, generating a dehydroalanine residue.

Its subcellular location is the cytoplasm. The protein resides in the nucleus. The catalysed reaction is [ADP-thiazole synthase]-L-cysteine + glycine + NAD(+) = [ADP-thiazole synthase]-dehydroalanine + ADP-5-ethyl-4-methylthiazole-2-carboxylate + nicotinamide + 3 H2O + 2 H(+). Functionally, involved in biosynthesis of the thiamine precursor thiazole. Catalyzes the conversion of NAD and glycine to adenosine diphosphate 5-(2-hydroxyethyl)-4-methylthiazole-2-carboxylic acid (ADT), an adenylated thiazole intermediate. The reaction includes an iron-dependent sulfide transfer from a conserved cysteine residue of the protein to a thiazole intermediate. The enzyme can only undergo a single turnover, which suggests it is a suicide enzyme. May have additional roles in adaptation to various stress conditions and in DNA damage tolerance. This chain is Thiamine thiazole synthase, found in Phaeosphaeria nodorum (strain SN15 / ATCC MYA-4574 / FGSC 10173) (Glume blotch fungus).